The sequence spans 1142 residues: Fibronectin type-III domain-containing protein 3A (1142 aa).

The disordered stretch occupies residues 104-191 (YGDVDAHSTH…KSGKGKGGTQ (88 aa)). Residues 107 to 145 (VDAHSTHGRSNFRDERSSKTYERLQKKLKDRQGTQKDKM) show a composition bias toward basic and acidic residues. A compositionally biased stretch (low complexity) spans 146–158 (SSPPSSPQKCPSP). A phosphoserine mark is found at Ser-147, Ser-151, and Ser-157. Fibronectin type-III domains are found at residues 212–313 (NIVK…TLSC), 317–409 (IPNP…TSGC), 413–506 (MPAS…TCPD), 510–604 (IPVK…TPAV), 608–701 (PCLP…TAPG), 705–795 (QCKP…TPPS), 805–894 (EISD…TKPL), 895–989 (PPDP…TPKS), and 990–1095 (VPAA…TEPP). Residue Lys-328 is modified to N6-acetyllysine. A helical membrane pass occupies residues 1121–1141 (NLVLFAFFSILIAFIIQYFVI).

It belongs to the FNDC3 family.

Its subcellular location is the golgi apparatus membrane. Mediates spermatid-Sertoli adhesion during spermatogenesis. The protein is Fibronectin type-III domain-containing protein 3A (FNDC3A) of Pongo abelii (Sumatran orangutan).